The sequence spans 179 residues: Ribulose bisphosphate carboxylase small subunit, chloroplastic 1/4 (179 aa).

A chloroplast-targeting transit peptide spans 1-58 (MAASSTMLSSVATAACAAPAQASMVAPFVGLKSTSAFPVTQKPATGLSTLPSNGGRVQ).

This sequence belongs to the RuBisCO small chain family. In terms of assembly, heterohexadecamer of 8 large and 8 small subunits.

Its subcellular location is the plastid. The protein localises to the chloroplast. Its function is as follows. RuBisCO catalyzes two reactions: the carboxylation of D-ribulose 1,5-bisphosphate, the primary event in carbon dioxide fixation, as well as the oxidative fragmentation of the pentose substrate. Both reactions occur simultaneously and in competition at the same active site. Although the small subunit is not catalytic it is essential for maximal activity. This Fritillaria agrestis (Stinkbells) protein is Ribulose bisphosphate carboxylase small subunit, chloroplastic 1/4 (RBCS1).